The sequence spans 948 residues: Putative helicase 009L (948 aa).

In terms of domain architecture, Helicase ATP-binding spans 64 to 243; that stretch reads LSEDTPYREL…ADVLNLILPQ (180 aa). 77–84 contacts ATP; that stretch reads HAPGTGKT. The DEAH box signature appears at 187 to 190; the sequence is DEVH. The 184-residue stretch at 371–554 folds into the Helicase C-terminal domain; sequence VKYDYLVRVA…AVERILMTSA (184 aa).

The chain is Putative helicase 009L from Frog virus 3 (isolate Goorha) (FV-3).